A 493-amino-acid chain; its full sequence is EGF-containing fibulin-like extracellular matrix protein 1 (493 aa).

The first 17 residues, 1 to 17 (MLQTLFLTMLTLALVKS), serve as a signal peptide directing secretion. Positions 26-71 (YTQCTDGYEWDPIRQQCKDIDECDIVPDACKGGMKCVNHYGGYLCL) constitute an EGF-like 1; atypical domain. The EGF-like 2; calcium-binding domain maps to 173–213 (DIDECTSGTHNCRTDQVCINLRGSFTCQCLPGYQKRGEQCV). Disulfide bonds link C177–C190, C184–C199, C201–C212, C218–C228, C224–C237, C239–C252, C258–C268, C264–C277, C279–C292, C298–C309, C305–C318, C320–C332, C338–C350, C344–C359, and C365–C377. In terms of domain architecture, EGF-like 3; calcium-binding spans 214-253 (DIDECTVPPYCHQRCVNTPGSFYCQCSPGFQLAANNYTCV). N249 is a glycosylation site (N-linked (GlcNAc...) asparagine). The EGF-like 4; calcium-binding domain maps to 254-293 (DINECDASNQCAQQCYNILGSFICQCNQGYELSSDRLNCE). Positions 259-493 (DASNQCAQQC…LTIIVGPFSF (235 aa)) are mediates interaction with TIMP3. Residues 294–333 (DIDECRTSSYLCQYQCVNEPGKFSCMCPQGYEVVRSRTCQ) form the EGF-like 5; calcium-binding domain. One can recognise an EGF-like 6; calcium-binding domain in the interval 334–378 (DINECETTNECREDEMCWNYHGGFRCYPRNPCQDHYVLTSENRCV).

Belongs to the fibulin family. Interacts with ECM1. Interacts with TIMP3. As to expression, expressed in the eye in the ciliary body, cornea, inner nuclear layer of the retina, and in the optic disk.

Its subcellular location is the secreted. It is found in the extracellular space. The protein resides in the extracellular matrix. Functionally, binds EGFR, the EGF receptor, inducing EGFR autophosphorylation and the activation of downstream signaling pathways. May play a role in cell adhesion and migration. May function as a negative regulator of chondrocyte differentiation. In the olfactory epithelium, it may regulate glial cell migration, differentiation and the ability of glial cells to support neuronal neurite outgrowth. This Mus musculus (Mouse) protein is EGF-containing fibulin-like extracellular matrix protein 1 (Efemp1).